The sequence spans 575 residues: Membrane protein insertase YidC (575 aa).

A run of 6 helical transmembrane segments spans residues 6 to 26, 357 to 377, 381 to 401, 448 to 468, 490 to 510, and 526 to 546; these read VFLI…WGKD, FSIM…LHSF, WGWA…PLSA, GGCL…WVLV, PYFI…KLTP, and PLVF…YWVV.

It belongs to the OXA1/ALB3/YidC family. Type 1 subfamily. In terms of assembly, interacts with the Sec translocase complex via SecD. Specifically interacts with transmembrane segments of nascent integral membrane proteins during membrane integration.

The protein localises to the cell inner membrane. Its function is as follows. Required for the insertion and/or proper folding and/or complex formation of integral membrane proteins into the membrane. Involved in integration of membrane proteins that insert both dependently and independently of the Sec translocase complex, as well as at least some lipoproteins. Aids folding of multispanning membrane proteins. The chain is Membrane protein insertase YidC from Xanthomonas campestris pv. campestris (strain B100).